The following is a 122-amino-acid chain: UPF0102 protein cgR_1859 (122 aa).

It belongs to the UPF0102 family.

The chain is UPF0102 protein cgR_1859 from Corynebacterium glutamicum (strain R).